The sequence spans 163 residues: Putative 4-hydroxy-4-methyl-2-oxoglutarate aldolase (163 aa).

Residues 76 to 79 (GDML) and arginine 98 contribute to the substrate site. A divalent metal cation is bound at residue aspartate 99.

The protein belongs to the class II aldolase/RraA-like family. Homotrimer. It depends on a divalent metal cation as a cofactor.

The enzyme catalyses 4-hydroxy-4-methyl-2-oxoglutarate = 2 pyruvate. The catalysed reaction is oxaloacetate + H(+) = pyruvate + CO2. In terms of biological role, catalyzes the aldol cleavage of 4-hydroxy-4-methyl-2-oxoglutarate (HMG) into 2 molecules of pyruvate. Also contains a secondary oxaloacetate (OAA) decarboxylase activity due to the common pyruvate enolate transition state formed following C-C bond cleavage in the retro-aldol and decarboxylation reactions. This chain is Putative 4-hydroxy-4-methyl-2-oxoglutarate aldolase, found in Pseudomonas putida (strain GB-1).